The sequence spans 153 residues: Transcription antitermination protein NusB (153 aa).

The protein belongs to the NusB family.

Involved in transcription antitermination. Required for transcription of ribosomal RNA (rRNA) genes. Binds specifically to the boxA antiterminator sequence of the ribosomal RNA (rrn) operons. In Clostridium tetani (strain Massachusetts / E88), this protein is Transcription antitermination protein NusB.